Consider the following 66-residue polypeptide: Potassium channel toxin alpha-KTx 30.3 (66 aa).

The first 24 residues, 1-24 (MNKTFFLVVIMATVLVLAFDATDA), serve as a signal peptide directing secretion. 3 cysteine pairs are disulfide-bonded: C30–C50, C36–C55, and C40–C57.

The protein belongs to the short scorpion toxin superfamily. Potassium channel inhibitor family. Alpha-KTx 30 subfamily. In terms of tissue distribution, expressed by the venom gland.

It is found in the secreted. In terms of biological role, inhibits Kv1.3/KCNA3 channel. The chain is Potassium channel toxin alpha-KTx 30.3 from Scorpiops jendeki (Scorpion).